The following is a 362-amino-acid chain: Methylthioribose-1-phosphate isomerase (362 aa).

Substrate contacts are provided by residues 49-51 (RGA), R89, and Q201. The Proton donor role is filled by D242. Residue 252 to 253 (NK) participates in substrate binding.

It belongs to the eIF-2B alpha/beta/delta subunits family. MtnA subfamily.

It carries out the reaction 5-(methylsulfanyl)-alpha-D-ribose 1-phosphate = 5-(methylsulfanyl)-D-ribulose 1-phosphate. It participates in amino-acid biosynthesis; L-methionine biosynthesis via salvage pathway; L-methionine from S-methyl-5-thio-alpha-D-ribose 1-phosphate: step 1/6. Catalyzes the interconversion of methylthioribose-1-phosphate (MTR-1-P) into methylthioribulose-1-phosphate (MTRu-1-P). The sequence is that of Methylthioribose-1-phosphate isomerase from Leptospira borgpetersenii serovar Hardjo-bovis (strain JB197).